The following is a 587-amino-acid chain: 2-succinyl-5-enolpyruvyl-6-hydroxy-3-cyclohexene-1-carboxylate synthase (587 aa).

Belongs to the TPP enzyme family. MenD subfamily. As to quaternary structure, homodimer. It depends on Mg(2+) as a cofactor. Mn(2+) is required as a cofactor. Requires thiamine diphosphate as cofactor.

The enzyme catalyses isochorismate + 2-oxoglutarate + H(+) = 5-enolpyruvoyl-6-hydroxy-2-succinyl-cyclohex-3-ene-1-carboxylate + CO2. The protein operates within quinol/quinone metabolism; 1,4-dihydroxy-2-naphthoate biosynthesis; 1,4-dihydroxy-2-naphthoate from chorismate: step 2/7. It participates in quinol/quinone metabolism; menaquinone biosynthesis. Its function is as follows. Catalyzes the thiamine diphosphate-dependent decarboxylation of 2-oxoglutarate and the subsequent addition of the resulting succinic semialdehyde-thiamine pyrophosphate anion to isochorismate to yield 2-succinyl-5-enolpyruvyl-6-hydroxy-3-cyclohexene-1-carboxylate (SEPHCHC). In Chloroflexus aurantiacus (strain ATCC 29366 / DSM 635 / J-10-fl), this protein is 2-succinyl-5-enolpyruvyl-6-hydroxy-3-cyclohexene-1-carboxylate synthase.